The following is a 572-amino-acid chain: Methionine--tRNA ligase (572 aa).

Positions 11–21 (PYINGVKHLGN) match the 'HIGH' region motif. Positions 143, 146, 156, and 159 each coordinate Zn(2+). A 'KMSKS' region motif is present at residues 341 to 345 (KFSTS). Threonine 344 contributes to the ATP binding site.

This sequence belongs to the class-I aminoacyl-tRNA synthetase family. MetG type 1 subfamily. As to quaternary structure, monomer. Requires Zn(2+) as cofactor.

The protein resides in the cytoplasm. It carries out the reaction tRNA(Met) + L-methionine + ATP = L-methionyl-tRNA(Met) + AMP + diphosphate. Its function is as follows. Is required not only for elongation of protein synthesis but also for the initiation of all mRNA translation through initiator tRNA(fMet) aminoacylation. The polypeptide is Methionine--tRNA ligase (Maricaulis maris (strain MCS10) (Caulobacter maris)).